The following is a 492-amino-acid chain: Catalase-1 (492 aa).

Catalysis depends on residues histidine 65 and asparagine 138. Tyrosine 348 serves as a coordination point for heme.

It belongs to the catalase family. In terms of assembly, homotetramer. Heme is required as a cofactor.

It is found in the peroxisome. Its subcellular location is the glyoxysome. The enzyme catalyses 2 H2O2 = O2 + 2 H2O. In terms of biological role, occurs in almost all aerobically respiring organisms and serves to protect cells from the toxic effects of hydrogen peroxide. In Triticum aestivum (Wheat), this protein is Catalase-1 (CAT1).